We begin with the raw amino-acid sequence, 1293 residues long: Period circadian protein homolog 1 (1293 aa).

The segment at 1–134 (MSGPLEGADG…SSEQSARART (134 aa)) is disordered. An interaction with BTRC region spans residues 1–151 (MSGPLEGADG…LRELKLRLPP (151 aa)). Low complexity-rich tracts occupy residues 48-57 (NSNGSSGNES) and 64-115 (GASQ…ASSE). Residues 116-132 (QDNPSTSGCSSEQSARA) show a composition bias toward polar residues. Threonine 121 carries the phosphothreonine; by CSNK1E modification. Residues serine 122 and serine 126 each carry the phosphoserine; by CSNK1E modification. Residues 138-147 (LMTALRELKL) carry the Nuclear export signal 1 motif. PAS domains follow at residues 208 to 275 (ITSE…PSRL) and 348 to 414 (YEAP…KILQ). Positions 422–465 (HSPIRFCARNGEYVTMDTSWAGFVHPWSRKVAFVLGRHKVRTAP) constitute a PAC domain. Residues 489–498 (LSEQIHRLLL) carry the Nuclear export signal 2 motif. Disordered regions lie at residues 509-544 (LCGVGPLMSPGPLHSPGSSSDSNGGDAEGPGPPAPV) and 647-697 (TKRK…KEPV). 2 stretches are compositionally biased toward low complexity: residues 513–533 (GPLMSPGPLHSPGSSSDSNGG) and 652–661 (ASSSCTASSA). Residues 596–814 (ELEVAPAPDQ…GLDTSSVAPS (219 aa)) form a required for phosphorylation by CSNK1E region. 3 positions are modified to phosphoserine: serine 660, serine 662, and serine 703. Disordered regions lie at residues 748–771 (GLAPGPAPSPAPSPTVAPDPAPDA), 808–870 (TSSV…PPAT), 935–1094 (SQAP…SKYF), and 1204–1293 (SVQD…NGTS). Pro residues predominate over residues 750-768 (APGPAPSPAPSPTVAPDPA). Phosphoserine is present on serine 814. Positions 823-839 (IPSGRRHHCRSKAKRSR) match the Nuclear localization signal motif. Residues 826-843 (GRRHHCRSKAKRSRHHQT) show a composition bias toward basic residues. Pro residues-rich tracts occupy residues 856–870 (SPVPSSGPWPPPPAT) and 952–962 (PSLPPPPPSPP). The segment covering 969–982 (LFNSRCSSPLQLNL) has biased composition (polar residues). A phosphoserine mark is found at serine 975 and serine 976. The short motif at 978–985 (LQLNLLQL) is the Nuclear export signal 3 element. Residues 1032–1058 (LSGSSDLLELLLQEDSRSGTGSAASGS) show a composition bias toward low complexity. Positions 1039-1043 (LELLL) match the LXXLL motif. Residues 1059–1073 (LGSGLGSGSGSGSHE) are compositionally biased toward gly residues. The segment covering 1074–1091 (GGSTSASITRSSQSSHTS) has biased composition (low complexity). Residues 1145-1293 (SRDAASVLKQ…ALPAEENGTS (149 aa)) are CRY binding domain. A compositionally biased stretch (gly residues) spans 1232–1250 (GEGGGVGGGGGGVGGGGGD). Residues 1255 to 1269 (AQTQIGTKGSSSQDS) show a composition bias toward polar residues.

As to quaternary structure, homodimer. Component of the circadian core oscillator, which includes the CRY proteins, CLOCK or NPAS2, BMAL1 or BMAL2, CSNK1D and/or CSNK1E, TIMELESS, and the PER proteins. Interacts directly with TIMELESS, PER2, PER3, CRY1 and CRY2. Interacts with BMAL1 and CLOCK. Interacts with GPRASP1. Interacts (phosphorylated) with BTRC and FBXW11; the interactions trigger proteasomal degradation. Interacts with NONO and WDR5. Interacts with SFPQ. Interacts with USP2. Interacts with HNF4A. In terms of processing, phosphorylated on serine residues by CSNK1D, CSNK1E and probably also by CSNK1G2. Phosphorylation by CSNK1D or CSNK1E promotes nuclear location of PER proteins as well as ubiquitination and subsequent degradation. May be dephosphorylated by PP1. Ubiquitinated; requires phosphorylation by CSNK1E and interaction with BTRC and FBXW11. Deubiquitinated by USP2. As to expression, expressed in pancreas. In the CNS, highly expressed in the SCN, internal granular layer of granular cells of the olfactory bulb, tuberculum olfactorium, piriform cortex, gyrus dentatus of the hippocampus, cerebellum, pars tuberalis/median eminence, and pituitary, and moderately in the tenia tecta, caudate putamen, accumbens nucleus, spinal cord, superior and inferior colliculus and pineal gland.

The protein localises to the nucleus. The protein resides in the cytoplasm. In terms of biological role, transcriptional repressor which forms a core component of the circadian clock. The circadian clock, an internal time-keeping system, regulates various physiological processes through the generation of approximately 24 hour circadian rhythms in gene expression, which are translated into rhythms in metabolism and behavior. It is derived from the Latin roots 'circa' (about) and 'diem' (day) and acts as an important regulator of a wide array of physiological functions including metabolism, sleep, body temperature, blood pressure, endocrine, immune, cardiovascular, and renal function. Consists of two major components: the central clock, residing in the suprachiasmatic nucleus (SCN) of the brain, and the peripheral clocks that are present in nearly every tissue and organ system. Both the central and peripheral clocks can be reset by environmental cues, also known as Zeitgebers (German for 'timegivers'). The predominant Zeitgeber for the central clock is light, which is sensed by retina and signals directly to the SCN. The central clock entrains the peripheral clocks through neuronal and hormonal signals, body temperature and feeding-related cues, aligning all clocks with the external light/dark cycle. Circadian rhythms allow an organism to achieve temporal homeostasis with its environment at the molecular level by regulating gene expression to create a peak of protein expression once every 24 hours to control when a particular physiological process is most active with respect to the solar day. Transcription and translation of core clock components (CLOCK, NPAS2, BMAL1, BMAL2, PER1, PER2, PER3, CRY1 and CRY2) plays a critical role in rhythm generation, whereas delays imposed by post-translational modifications (PTMs) are important for determining the period (tau) of the rhythms (tau refers to the period of a rhythm and is the length, in time, of one complete cycle). A diurnal rhythm is synchronized with the day/night cycle, while the ultradian and infradian rhythms have a period shorter and longer than 24 hours, respectively. Disruptions in the circadian rhythms contribute to the pathology of cardiovascular diseases, cancer, metabolic syndromes and aging. A transcription/translation feedback loop (TTFL) forms the core of the molecular circadian clock mechanism. Transcription factors, CLOCK or NPAS2 and BMAL1 or BMAL2, form the positive limb of the feedback loop, act in the form of a heterodimer and activate the transcription of core clock genes and clock-controlled genes (involved in key metabolic processes), harboring E-box elements (5'-CACGTG-3') within their promoters. The core clock genes: PER1/2/3 and CRY1/2 which are transcriptional repressors form the negative limb of the feedback loop and interact with the CLOCK|NPAS2-BMAL1|BMAL2 heterodimer inhibiting its activity and thereby negatively regulating their own expression. This heterodimer also activates nuclear receptors NR1D1/2 and RORA/B/G, which form a second feedback loop and which activate and repress BMAL1 transcription, respectively. Regulates circadian target genes expression at post-transcriptional levels, but may not be required for the repression at transcriptional level. Controls PER2 protein decay. Represses CRY2 preventing its repression on CLOCK/BMAL1 target genes such as FXYD5 and SCNN1A in kidney and PPARA in liver. Besides its involvement in the maintenance of the circadian clock, has an important function in the regulation of several processes. Participates in the repression of glucocorticoid receptor NR3C1/GR-induced transcriptional activity by reducing the association of NR3C1/GR to glucocorticoid response elements (GREs) by BMAL1:CLOCK. Plays a role in the modulation of the neuroinflammatory state via the regulation of inflammatory mediators release, such as CCL2 and IL6. In spinal astrocytes, negatively regulates the MAPK14/p38 and MAPK8/JNK MAPK cascades as well as the subsequent activation of NFkappaB. Coordinately regulates the expression of multiple genes that are involved in the regulation of renal sodium reabsorption. Can act as gene expression activator in a gene and tissue specific manner, in kidney enhances WNK1 and SLC12A3 expression in collaboration with CLOCK. Modulates hair follicle cycling. Represses the CLOCK-BMAL1 induced transcription of BHLHE40/DEC1. In Rattus norvegicus (Rat), this protein is Period circadian protein homolog 1.